A 102-amino-acid polypeptide reads, in one-letter code: Putative pterin-4-alpha-carbinolamine dehydratase (102 aa).

Belongs to the pterin-4-alpha-carbinolamine dehydratase family.

It carries out the reaction (4aS,6R)-4a-hydroxy-L-erythro-5,6,7,8-tetrahydrobiopterin = (6R)-L-erythro-6,7-dihydrobiopterin + H2O. The chain is Putative pterin-4-alpha-carbinolamine dehydratase from Burkholderia vietnamiensis (strain G4 / LMG 22486) (Burkholderia cepacia (strain R1808)).